A 447-amino-acid polypeptide reads, in one-letter code: Signal recognition particle 54 kDa protein (447 aa).

GTP-binding positions include 103 to 110 (GVQGSGKT), 185 to 189 (DTAGR), and 245 to 248 (TKMD).

The protein belongs to the GTP-binding SRP family. SRP54 subfamily. In terms of assembly, part of the signal recognition particle protein translocation system, which is composed of SRP and FtsY. Archaeal SRP consists of a 7S RNA molecule of 300 nucleotides and two protein subunits: SRP54 and SRP19.

It is found in the cytoplasm. It catalyses the reaction GTP + H2O = GDP + phosphate + H(+). Involved in targeting and insertion of nascent membrane proteins into the cytoplasmic membrane. Binds to the hydrophobic signal sequence of the ribosome-nascent chain (RNC) as it emerges from the ribosomes. The SRP-RNC complex is then targeted to the cytoplasmic membrane where it interacts with the SRP receptor FtsY. The polypeptide is Signal recognition particle 54 kDa protein (Saccharolobus islandicus (strain M.16.27) (Sulfolobus islandicus)).